The sequence spans 494 residues: Aspartyl/glutamyl-tRNA(Asn/Gln) amidotransferase subunit B (494 aa).

The interval 475–494 (TSGRADPKATNQMLAKKLKG) is disordered.

The protein belongs to the GatB/GatE family. GatB subfamily. As to quaternary structure, heterotrimer of A, B and C subunits.

The enzyme catalyses L-glutamyl-tRNA(Gln) + L-glutamine + ATP + H2O = L-glutaminyl-tRNA(Gln) + L-glutamate + ADP + phosphate + H(+). It carries out the reaction L-aspartyl-tRNA(Asn) + L-glutamine + ATP + H2O = L-asparaginyl-tRNA(Asn) + L-glutamate + ADP + phosphate + 2 H(+). Its function is as follows. Allows the formation of correctly charged Asn-tRNA(Asn) or Gln-tRNA(Gln) through the transamidation of misacylated Asp-tRNA(Asn) or Glu-tRNA(Gln) in organisms which lack either or both of asparaginyl-tRNA or glutaminyl-tRNA synthetases. The reaction takes place in the presence of glutamine and ATP through an activated phospho-Asp-tRNA(Asn) or phospho-Glu-tRNA(Gln). The chain is Aspartyl/glutamyl-tRNA(Asn/Gln) amidotransferase subunit B from Acaryochloris marina (strain MBIC 11017).